Reading from the N-terminus, the 612-residue chain is Alpha-glycerophosphate oxidase (612 aa).

21 to 49 is a binding site for FAD; sequence DLLIIGGGITGAGVALQAAASGLDTGLIE. Residues 398-408 are compositionally biased toward basic and acidic residues; that stretch reads VETSTSEKELD. Positions 398–418 are disordered; the sequence is VETSTSEKELDPSAVSRGSSF.

It belongs to the FAD-dependent glycerol-3-phosphate dehydrogenase family. FAD is required as a cofactor.

Its subcellular location is the cytoplasm. The catalysed reaction is sn-glycerol 3-phosphate + O2 = dihydroxyacetone phosphate + H2O2. The protein is Alpha-glycerophosphate oxidase (glpO) of Streptococcus pyogenes serotype M3 (strain ATCC BAA-595 / MGAS315).